We begin with the raw amino-acid sequence, 472 residues long: WASH complex subunit 1 (472 aa).

Residues Met1–Arg51 are required for WASH complex assembly. Disordered stretches follow at residues Glu289–Arg365, Gly377–Met412, and Ile426–Ser472. Composition is skewed to pro residues over residues Leu301–Pro319 and Ser327–Ala336. The segment at Gln352–Ser472 is VCA. Positions Gly364–Val386 constitute a WH2 domain. Basic and acidic residues predominate over residues Asn385–Gln401.

This sequence belongs to the WASH1 family. In terms of assembly, component of the WASH complex.

The protein resides in the early endosome membrane. The protein localises to the recycling endosome membrane. Functionally, acts as a nucleation-promoting factor at the surface of endosomes, where it recruits and activates the Arp2/3 complex to induce actin polymerization, playing a key role in the fission of tubules that serve as transport intermediates during endosome sorting. This chain is WASH complex subunit 1, found in Xenopus tropicalis (Western clawed frog).